Here is a 494-residue protein sequence, read N- to C-terminus: Sulfate adenylyltransferase subunit 1 (494 aa).

Residues 24–240 (TRPLRLITCG…LELATVRSAQ (217 aa)) form the tr-type G domain. Residues 33–40 (GSVDDGKS) form a G1 region. 33 to 40 (GSVDDGKS) serves as a coordination point for GTP. A G2 region spans residues 91–95 (GITID). The tract at residues 112–115 (DTPG) is G3. GTP contacts are provided by residues 112-116 (DTPGH) and 167-170 (NKID). The tract at residues 167–170 (NKID) is G4. The tract at residues 204 to 206 (SAL) is G5.

Belongs to the TRAFAC class translation factor GTPase superfamily. Classic translation factor GTPase family. CysN/NodQ subfamily. In terms of assembly, heterodimer composed of CysD, the smaller subunit, and CysN.

The enzyme catalyses sulfate + ATP + H(+) = adenosine 5'-phosphosulfate + diphosphate. It participates in sulfur metabolism; hydrogen sulfide biosynthesis; sulfite from sulfate: step 1/3. With CysD forms the ATP sulfurylase (ATPS) that catalyzes the adenylation of sulfate producing adenosine 5'-phosphosulfate (APS) and diphosphate, the first enzymatic step in sulfur assimilation pathway. APS synthesis involves the formation of a high-energy phosphoric-sulfuric acid anhydride bond driven by GTP hydrolysis by CysN coupled to ATP hydrolysis by CysD. In Rhizobium rhizogenes (strain K84 / ATCC BAA-868) (Agrobacterium radiobacter), this protein is Sulfate adenylyltransferase subunit 1.